The sequence spans 325 residues: Delta(1)-pyrroline-2-carboxylate reductase (325 aa).

Belongs to the ornithine cyclodeaminase/mu-crystallin family.

It catalyses the reaction L-proline + NAD(+) = 1-pyrroline-2-carboxylate + NADH + H(+). The catalysed reaction is L-proline + NADP(+) = 1-pyrroline-2-carboxylate + NADPH + H(+). Functionally, catalyzes the reduction of Delta(1)-pyrroline-2-carboxylate (Pyr2C) to L-proline, using preferentially NADPH over NADH as the electron donor. Is likely involved in a degradation pathway that converts trans-3-hydroxy-L-proline (t3LHyp) to L-proline. In Bacillus thuringiensis subsp. konkukian (strain 97-27), this protein is Delta(1)-pyrroline-2-carboxylate reductase.